The chain runs to 979 residues: MLRRPAPALAPAVRLLLAGLLCGGGVWAARVNKHKPWLEPTYHGIVTENDNTVLLDPPLIALDKDSPLRFAESFEVTVTKEGEICGFKIHGQNVPFDAVVVDKSTGEGIIRSKEKLDCELQKDYTFTIQAYDCGKGPDGTGVKKSHKATVHIQVNDVNEYAPVFKEKSYKAAVVEGKQHSSILRVEAVDADCSPQFSQICSYEILTPDVPFTVDKDGYIKNTEKLNYGKEHQYKLTVTAYDCGKKRATEDVLVKISVKPTCSPGWQGWSSRIEYEPGTGALAVFPSIHLETCDEPVASVQATVELETSHIGKGCDRDTYSEKSLHRLCGAAAGTSELLPSPSSSFNWTVGLPTDNGHDSDQVFEFNGTQAVRIPDGVVTLDPKEPFTISVWMRHGPFGRKKETILCSSDKTDMNRHHYSLYVHGCRLVFLLRQDPSEEKKYRPAEFHWKLNQVCDEDWHHFVLNVEVPSVTLYVDGIPHEPFSVTEDYPLHPTKIETQLVVGACWQEYSGVESGNETEPATMASAGGDLHMTQFFRGNLAGLTVRSGKLADKKVIDCLYTCKEGLDLQVPEDANRGVQIQASSSQAVLTLEGDNVGELDKAMQHISYLNSRQFPTPGIRRLKITSTVKCFNEAACIEVPPVEGYVMVLQPEEPKISLSGVHHFARAASEFESAEGISLFPELRIISTITREVEPEADGSEDPTVQESLVSEEIVHDLDTCEVTVEGDELNAEQESLEVDVTRLQQKGIEASHSDLGVVFTGVETMASYEEVLHLLRYRNWHTRSLLDRKFKLICSELNGRYLSNEFKVEVNVIHTANPVEHANHMAAQPQFVHPEHRSFVDLSGHNLANPHPFAVVPSTATVVIVVCVSFLVFMIILGVFRIRAAHQRTMRDQDTGKENEMDWDDSALTITVNPMETYEDQHSSEEEEEEEEEEESEDGEEEEDITSAESESSEEEEGGPGDGQNATRQLEWDDSTLSY.

The signal sequence occupies residues 1–28 (MLRRPAPALAPAVRLLLAGLLCGGGVWA). Residues 29–859 (ARVNKHKPWL…PHPFAVVPST (831 aa)) are Extracellular-facing. 2 Cadherin domains span residues 38-164 (LEPT…APVF) and 165-265 (KEKS…SPGW). Residues N346, N366, and N515 are each glycosylated (N-linked (GlcNAc...) asparagine). A helical membrane pass occupies residues 860 to 880 (ATVVIVVCVSFLVFMIILGVF). Topologically, residues 881-979 (RIRAAHQRTM…LEWDDSTLSY (99 aa)) are cytoplasmic. Positions 915–979 (METYEDQHSS…LEWDDSTLSY (65 aa)) are disordered. Residues 925 to 959 (EEEEEEEEEEESEDGEEEEDITSAESESSEEEEGG) are compositionally biased toward acidic residues.

Belongs to the calsyntenin family. As to quaternary structure, directly interacts with APBA2. Forms a tripartite complex with APBA2 and APP. The CTF1 chain interacts with PSEN1. Interacts with KLC1 and APBB1. In terms of assembly, interacts with APBB1; this interaction stabilizes AlcICD metabolism. Interacts with PSEN1. Proteolytically processed under normal cellular conditions. A primary zeta-cleavage generates a large extracellular (soluble) N-terminal domain (sAlc) and a short C-terminal transmembrane fragment (CTF1). A secondary cleavage catalyzed by presenilin gamma-secretase within the transmembrane domain releases the beta-Alc-alpha chain in the extracellular milieu and produces an intracellular fragment (AlcICD). Beta-Alc-alpha secretion is largely dependent upon PSEN1 and PSEN2. This processing is strongly suppressed in the tripartite complex formed with APBA2 and APP, which seems to prevent the association with PSEN1. As to expression, highly expressed in the brain (at protein level), with over 90% of the neurons expressing detectable amounts. In the brain, relatively high levels in the cerebral cortex, striatum, hippocampus and thalamus. Moderate levels in the cerebellum. Low levels in the olfactory bulb, midbrain and pons (at protein level). Not detected in Purkinje cells. Expressed at low levels in the lung (at protein level). At the mRNA level, weakly detected in the kidney, lung, skeletal muscle, heart and testis. Not expressed in the sciatic nerve fiber.

The protein resides in the postsynaptic cell membrane. It is found in the endoplasmic reticulum membrane. Its subcellular location is the golgi apparatus membrane. The protein localises to the cell projection. It localises to the neuron projection. The protein resides in the vesicle. It is found in the nucleus. Postsynaptic adhesion molecule that binds to presynaptic neurexins to mediate both excitatory and inhibitory synapse formation. Promotes synapse development by acting as a cell adhesion molecule at the postsynaptic membrane, which associates with neurexin-alpha at the presynaptic membrane. Also functions as a cargo in axonal anterograde transport by acting as a molecular adapter that promotes KLC1 association with vesicles. Complex formation with APBA2 and APP, stabilizes APP metabolism and enhances APBA2-mediated suppression of beta-APP40 secretion, due to the retardation of intracellular APP maturation. Functionally, as intracellular fragment AlcICD, suppresses APBB1-dependent transactivation stimulated by APP C-terminal intracellular fragment (AICD), most probably by competing with AICD for APBB1-binding. In terms of biological role, in complex with APBA2 and C99, a C-terminal APP fragment, abolishes C99 interaction with PSEN1 and thus APP C99 cleavage by gamma-secretase, most probably through stabilization of the direct interaction between APBA2 and APP. The polypeptide is Calsyntenin-1 (Mus musculus (Mouse)).